Reading from the N-terminus, the 361-residue chain is Probable dual-specificity RNA methyltransferase RlmN (361 aa).

The active-site Proton acceptor is E91. In terms of domain architecture, Radical SAM core spans Q97–R329. A disulfide bridge connects residues C104 and C340. [4Fe-4S] cluster is bound by residues C111, C115, and C118. Residues G163–E164, S195, S218–H220, and N296 contribute to the S-adenosyl-L-methionine site. C340 acts as the S-methylcysteine intermediate in catalysis.

It belongs to the radical SAM superfamily. RlmN family. [4Fe-4S] cluster serves as cofactor.

Its subcellular location is the cytoplasm. The enzyme catalyses adenosine(2503) in 23S rRNA + 2 reduced [2Fe-2S]-[ferredoxin] + 2 S-adenosyl-L-methionine = 2-methyladenosine(2503) in 23S rRNA + 5'-deoxyadenosine + L-methionine + 2 oxidized [2Fe-2S]-[ferredoxin] + S-adenosyl-L-homocysteine. It catalyses the reaction adenosine(37) in tRNA + 2 reduced [2Fe-2S]-[ferredoxin] + 2 S-adenosyl-L-methionine = 2-methyladenosine(37) in tRNA + 5'-deoxyadenosine + L-methionine + 2 oxidized [2Fe-2S]-[ferredoxin] + S-adenosyl-L-homocysteine. Functionally, specifically methylates position 2 of adenine 2503 in 23S rRNA and position 2 of adenine 37 in tRNAs. The protein is Probable dual-specificity RNA methyltransferase RlmN of Streptococcus pneumoniae serotype 19F (strain G54).